Consider the following 84-residue polypeptide: Putative membrane protein insertion efficiency factor (84 aa).

The protein belongs to the UPF0161 family.

It is found in the cell inner membrane. In terms of biological role, could be involved in insertion of integral membrane proteins into the membrane. The sequence is that of Putative membrane protein insertion efficiency factor from Shewanella halifaxensis (strain HAW-EB4).